The sequence spans 882 residues: Alanine--tRNA ligase (882 aa).

Zn(2+) is bound by residues H570, H574, C672, and H676.

The protein belongs to the class-II aminoacyl-tRNA synthetase family. The cofactor is Zn(2+).

It is found in the cytoplasm. The enzyme catalyses tRNA(Ala) + L-alanine + ATP = L-alanyl-tRNA(Ala) + AMP + diphosphate. Its function is as follows. Catalyzes the attachment of alanine to tRNA(Ala) in a two-step reaction: alanine is first activated by ATP to form Ala-AMP and then transferred to the acceptor end of tRNA(Ala). Also edits incorrectly charged Ser-tRNA(Ala) and Gly-tRNA(Ala) via its editing domain. This is Alanine--tRNA ligase from Xanthomonas campestris pv. campestris (strain B100).